A 333-amino-acid polypeptide reads, in one-letter code: MSDYLPVIGITMGDATGIGPEVIVKSLAHDSVRAQCRPLVIGDVRRLEVAGRLVGSPLKLRAIQAPEEARFQSGTIDCIDLGLIPEGLPFGKLSAVAGDAAFRYIERAVALTRDEKIDAICTAPLNKEALHAGGHKFPGHTEMLAYLTGTPEVSMMLVAPKLRVIHVTTHIGLLDAIRKIEPGLVQRTIERGHQTLQRAGIAAPRIGVCGINPHAGENGLFGHGEEEEKIIPAVEALRARGRDVEGPLPADTLFYRAGRGDFDLVVAMYHDQGHGPVKVLGLEAGVNITVGLPVIRTSVDHGTAFDIAGKGIADERSLLEALRQGAELATRRA.

Positions 140 and 141 each coordinate substrate. A divalent metal cation is bound by residues histidine 170, histidine 214, and histidine 270. Positions 278, 287, and 296 each coordinate substrate.

The protein belongs to the PdxA family. PdxA2 subfamily. Homodimer. The cofactor is a divalent metal cation.

The catalysed reaction is 4-O-phospho-D-threonate + NAD(+) = dihydroxyacetone phosphate + CO2 + NADH. In terms of biological role, catalyzes the NAD-dependent oxidation and subsequent decarboxylation of D-threonate 4-phosphate to produce dihydroxyacetone phosphate (DHAP). Can also use 4-hydroxy-L-threonine 4-phosphate as substrate. This chain is D-threonate 4-phosphate dehydrogenase, found in Cupriavidus necator (strain ATCC 17699 / DSM 428 / KCTC 22496 / NCIMB 10442 / H16 / Stanier 337) (Ralstonia eutropha).